Reading from the N-terminus, the 320-residue chain is Malate dehydrogenase (320 aa).

NAD(+)-binding positions include 10–15 and Asp34; that span reads GSGMIG. Residues Arg83 and Arg89 each contribute to the substrate site. NAD(+)-binding positions include Asn96 and 119–121; that span reads ITN. Residues Asn121 and Arg152 each coordinate substrate. The active-site Proton acceptor is His176.

The protein belongs to the LDH/MDH superfamily. MDH type 3 family.

The enzyme catalyses (S)-malate + NAD(+) = oxaloacetate + NADH + H(+). Functionally, catalyzes the reversible oxidation of malate to oxaloacetate. The polypeptide is Malate dehydrogenase (Brucella abortus (strain S19)).